The chain runs to 303 residues: GMP synthase [glutamine-hydrolyzing] subunit B (303 aa).

The region spanning 1–183 (MDVEKFVENA…LGLPKEISER (183 aa)) is the GMPS ATP-PPase domain. Position 28–34 (28–34 (SGGVDSS)) interacts with ATP.

In terms of assembly, heterodimer composed of a glutamine amidotransferase subunit (A) and a GMP-binding subunit (B).

The catalysed reaction is XMP + L-glutamine + ATP + H2O = GMP + L-glutamate + AMP + diphosphate + 2 H(+). It functions in the pathway purine metabolism; GMP biosynthesis; GMP from XMP (L-Gln route): step 1/1. Its function is as follows. Catalyzes the synthesis of GMP from XMP. The chain is GMP synthase [glutamine-hydrolyzing] subunit B (guaAB) from Archaeoglobus fulgidus (strain ATCC 49558 / DSM 4304 / JCM 9628 / NBRC 100126 / VC-16).